The following is a 306-amino-acid chain: Aspartate carbamoyltransferase catalytic subunit (306 aa).

Carbamoyl phosphate contacts are provided by Arg-55 and Thr-56. An L-aspartate-binding site is contributed by Lys-84. Carbamoyl phosphate contacts are provided by Arg-105, His-133, and Gln-136. Residues Arg-166 and Arg-227 each contribute to the L-aspartate site. Positions 265 and 266 each coordinate carbamoyl phosphate.

Belongs to the aspartate/ornithine carbamoyltransferase superfamily. ATCase family. As to quaternary structure, heterododecamer (2C3:3R2) of six catalytic PyrB chains organized as two trimers (C3), and six regulatory PyrI chains organized as three dimers (R2).

It catalyses the reaction carbamoyl phosphate + L-aspartate = N-carbamoyl-L-aspartate + phosphate + H(+). It functions in the pathway pyrimidine metabolism; UMP biosynthesis via de novo pathway; (S)-dihydroorotate from bicarbonate: step 2/3. Its function is as follows. Catalyzes the condensation of carbamoyl phosphate and aspartate to form carbamoyl aspartate and inorganic phosphate, the committed step in the de novo pyrimidine nucleotide biosynthesis pathway. The protein is Aspartate carbamoyltransferase catalytic subunit of Neisseria meningitidis serogroup C (strain 053442).